We begin with the raw amino-acid sequence, 240 residues long: Orotidine 5'-phosphate decarboxylase (240 aa).

Residues aspartate 15, lysine 37, 64–73 (DLKYHDIPNT), threonine 127, arginine 188, glutamine 197, glycine 217, and arginine 218 each bind substrate. Lysine 66 functions as the Proton donor in the catalytic mechanism.

Belongs to the OMP decarboxylase family. Type 1 subfamily. As to quaternary structure, homodimer.

The catalysed reaction is orotidine 5'-phosphate + H(+) = UMP + CO2. It participates in pyrimidine metabolism; UMP biosynthesis via de novo pathway; UMP from orotate: step 2/2. Catalyzes the decarboxylation of orotidine 5'-monophosphate (OMP) to uridine 5'-monophosphate (UMP). The sequence is that of Orotidine 5'-phosphate decarboxylase from Geobacter sp. (strain M21).